The sequence spans 382 residues: Chaperone protein DnaJ (382 aa).

Residues 4–69 (DYYEVLGVSR…DKRRRYDQFG (66 aa)) enclose the J domain. A CR-type zinc finger spans residues 138–219 (GVEKTIKIKK…CYGEGIKQGE (82 aa)). Cys151, Cys154, Cys167, Cys170, Cys193, Cys196, Cys207, and Cys210 together coordinate Zn(2+). CXXCXGXG motif repeat units follow at residues 151–158 (CKECNGSG), 167–174 (CPTCHGAG), 193–200 (CPTCGGEG), and 207–214 (CPSCYGEG).

The protein belongs to the DnaJ family. Homodimer. The cofactor is Zn(2+).

The protein resides in the cytoplasm. In terms of biological role, participates actively in the response to hyperosmotic and heat shock by preventing the aggregation of stress-denatured proteins and by disaggregating proteins, also in an autonomous, DnaK-independent fashion. Unfolded proteins bind initially to DnaJ; upon interaction with the DnaJ-bound protein, DnaK hydrolyzes its bound ATP, resulting in the formation of a stable complex. GrpE releases ADP from DnaK; ATP binding to DnaK triggers the release of the substrate protein, thus completing the reaction cycle. Several rounds of ATP-dependent interactions between DnaJ, DnaK and GrpE are required for fully efficient folding. Also involved, together with DnaK and GrpE, in the DNA replication of plasmids through activation of initiation proteins. In Chlorobium luteolum (strain DSM 273 / BCRC 81028 / 2530) (Pelodictyon luteolum), this protein is Chaperone protein DnaJ.